We begin with the raw amino-acid sequence, 43 residues long: Protein PsbN (43 aa).

Residues 5–27 (TLIAISISGLIVSFTGYALYTAF) traverse the membrane as a helical segment.

Belongs to the PsbN family.

The protein localises to the plastid. The protein resides in the chloroplast thylakoid membrane. May play a role in photosystem I and II biogenesis. In Cicer arietinum (Chickpea), this protein is Protein PsbN.